A 723-amino-acid chain; its full sequence is Transcription factor E2F7 (723 aa).

The interval 121–146 is disordered; the sequence is AEEEEEEELDDSCQYEALDESERRPS. The span at 122–139 shows a compositional bias: acidic residues; sequence EEEEEEELDDSCQYEALD. 2 DNA-binding regions span residues 147–216 and 264–349; these read RKQK…VWHG and RKDK…KWIG. 2 stretches are compositionally biased toward polar residues: residues 356 to 370 and 395 to 405; these read SSNS…SNSG and LISSAPSTPHR. Disordered stretches follow at residues 356–379, 395–417, 489–546, 650–689, and 702–723; these read SSNS…KMAR, LISS…YSRK, SLRK…ASFG, EHHG…SKSF, and QSAA…TAAN. Positions 494-503 are enriched in basic and acidic residues; the sequence is ERSEEDDHQT. Positions 520–535 are enriched in low complexity; it reads SESLSSSTRRSPVCSP.

It belongs to the E2F/DP family. In terms of assembly, homodimer and heterodimer: mainly forms homodimers and, to a lesser extent, heterodimers with e2f8.

The protein resides in the nucleus. In terms of biological role, atypical E2F transcription factor that participates in various processes such as angiogenesis and polyploidization of specialized cells. Mainly acts as a transcription repressor that binds DNA independently of DP proteins and specifically recognizes the E2 recognition site 5'-TTTC[CG]CGC-3'. Directly represses transcription of classical E2F transcription factors such as e2f1. Acts as a regulator of S-phase by recognizing and binding the E2-related site 5'-TTCCCGCC-3' and mediating repression of G1/S-regulated genes. Acts as a promoter of sprouting angiogenesis, possibly by acting as a transcription activator and promoting expression of vegfa. In Danio rerio (Zebrafish), this protein is Transcription factor E2F7 (e2f7).